Here is a 328-residue protein sequence, read N- to C-terminus: tRNA uridine(34) hydroxylase (328 aa).

A Rhodanese domain is found at L130–E224. C184 (cysteine persulfide intermediate) is an active-site residue.

This sequence belongs to the TrhO family.

The catalysed reaction is uridine(34) in tRNA + AH2 + O2 = 5-hydroxyuridine(34) in tRNA + A + H2O. In terms of biological role, catalyzes oxygen-dependent 5-hydroxyuridine (ho5U) modification at position 34 in tRNAs. This chain is tRNA uridine(34) hydroxylase, found in Streptococcus agalactiae serotype Ia (strain ATCC 27591 / A909 / CDC SS700).